The sequence spans 51 residues: Insulin (51 aa).

3 disulfide bridges follow: cysteine 7-cysteine 37, cysteine 19-cysteine 50, and cysteine 36-cysteine 41.

This sequence belongs to the insulin family. Heterodimer of a B chain and an A chain linked by two disulfide bonds.

It is found in the secreted. Insulin decreases blood glucose concentration. It increases cell permeability to monosaccharides, amino acids and fatty acids. It accelerates glycolysis, the pentose phosphate cycle, and glycogen synthesis in liver. This Balaenoptera borealis (Sei whale) protein is Insulin (INS).